A 92-amino-acid polypeptide reads, in one-letter code: Large ribosomal subunit protein bL28 (92 aa).

This sequence belongs to the bacterial ribosomal protein bL28 family.

The chain is Large ribosomal subunit protein bL28 from Borrelia garinii subsp. bavariensis (strain ATCC BAA-2496 / DSM 23469 / PBi) (Borreliella bavariensis).